The primary structure comprises 89 residues: Large ribosomal subunit protein bL27 (89 aa).

A disordered region spans residues 1–24 (MAHKKGTGSTRNGRDSNSKRLGVK).

Belongs to the bacterial ribosomal protein bL27 family.

The sequence is that of Large ribosomal subunit protein bL27 from Synechococcus sp. (strain WH7803).